Consider the following 371-residue polypeptide: Chaperone protein DnaJ (371 aa).

Residues 5-69 (DYYEVLGLSK…QKRAQYDQFG (65 aa)) enclose the J domain. Residues 133–215 (GKELNVEIPV…CHGSGKVRKR (83 aa)) form a CR-type zinc finger. The Zn(2+) site is built by C146, C149, C163, C166, C189, C192, C203, and C206. CXXCXGXG motif repeat units lie at residues 146 to 153 (CDTCKGSG), 163 to 170 (CKHCSGSG), 189 to 196 (CGHCSGTG), and 203 to 210 (CTTCHGSG).

The protein belongs to the DnaJ family. Homodimer. Requires Zn(2+) as cofactor.

The protein localises to the cytoplasm. In terms of biological role, participates actively in the response to hyperosmotic and heat shock by preventing the aggregation of stress-denatured proteins and by disaggregating proteins, also in an autonomous, DnaK-independent fashion. Unfolded proteins bind initially to DnaJ; upon interaction with the DnaJ-bound protein, DnaK hydrolyzes its bound ATP, resulting in the formation of a stable complex. GrpE releases ADP from DnaK; ATP binding to DnaK triggers the release of the substrate protein, thus completing the reaction cycle. Several rounds of ATP-dependent interactions between DnaJ, DnaK and GrpE are required for fully efficient folding. Also involved, together with DnaK and GrpE, in the DNA replication of plasmids through activation of initiation proteins. The sequence is that of Chaperone protein DnaJ from Bacillus cereus (strain ATCC 10987 / NRS 248).